The chain runs to 101 residues: A-type ATP synthase subunit F (101 aa).

The protein belongs to the V-ATPase F subunit family. In terms of assembly, has multiple subunits with at least A(3), B(3), C, D, E, F, H, I and proteolipid K(x).

It localises to the cell membrane. Component of the A-type ATP synthase that produces ATP from ADP in the presence of a proton gradient across the membrane. This Methanosarcina acetivorans (strain ATCC 35395 / DSM 2834 / JCM 12185 / C2A) protein is A-type ATP synthase subunit F.